The chain runs to 2517 residues: Non-reducing polyketide synthase pkbA (2517 aa).

An N-terminal acylcarrier protein transacylase domain (SAT) region spans residues 59–250; the sequence is LERVAGPAEK…KRFDLRGRFH (192 aa). Positions 380-775 constitute a Ketosynthase family 3 (KS3) domain; the sequence is SEPIAIIGMG…SANTVSSLKE (396 aa). Catalysis depends on for beta-ketoacyl synthase activity residues Cys547, His682, and His721. Residues 849-1158 are malonyl-CoA:ACP transacylase (MAT) domain; the sequence is AFGGQVARSV…TGTAALADAT (310 aa). The For acyl/malonyl transferase activity role is filled by Ser935. Residues 1221 to 1353 form an N-terminal hotdog fold region; the sequence is EEFLTFVKYK…GTVVLRENDT (133 aa). The PKS/mFAS DH domain occupies 1221 to 1530; the sequence is EEFLTFVKYK…FTRVQISSLG (310 aa). The tract at residues 1251–1525 is product template (PT) domain; it reads FVKGHAVLAE…ILGAHFTRVQ (275 aa). His1255 (proton acceptor; for dehydratase activity) is an active-site residue. Positions 1379-1530 are C-terminal hotdog fold; the sequence is DCHILQGPVV…FTRVQISSLG (152 aa). Asp1437 acts as the Proton donor; for dehydratase activity in catalysis. One can recognise a Carrier 1 domain in the interval 1574 to 1651; the sequence is RPTLEISEKL…SISKCLASYL (78 aa). Ser1611 bears the O-(pantetheine 4'-phosphoryl)serine mark. A disordered region spans residues 1659-1684; that stretch reads QPEDLADADSVESDSDMPTGAVTSGI. A compositionally biased stretch (acidic residues) spans 1662–1673; the sequence is DLADADSVESDS. One can recognise a Carrier 2 domain in the interval 1685-1761; the sequence is TTPDDAVSRL…DLIALVPALN (77 aa). Residue Ser1721 is modified to O-(pantetheine 4'-phosphoryl)serine. The interval 1976–2075 is methyltransferase (CMeT) domain; that stretch reads LELGGGTGGT…IHRMLRPDGF (100 aa). The interval 2200–2514 is thioesterase (TE) domain; that stretch reads LMIHGGGHIM…RGYDFLKEEV (315 aa).

The cofactor is pantetheine 4'-phosphate.

It carries out the reaction 3 malonyl-CoA + acetyl-CoA + S-adenosyl-L-methionine + H(+) = 3-methylorsellinate + S-adenosyl-L-homocysteine + 3 CO2 + 4 CoA. Its pathway is phytotoxin biosynthesis. Functionally, non-reducing polyketide synthase; part of the gene cluster that mediates the biosynthesis of cichorine, a phytotoxin active against knapweed, corn, and soybeans. The first step in the pathway is performed by the non-reducing polyketide synthase pkbA that condenses one acetyl-CoA starter unit with 3 malonyl-CoA units. PkbA also catalyzes one methylation step to produce 3-methylorsellinate. The nonribosomal peptide synthase-like protein cicB, the cytochrome P450 monooxygenase cicH and the O-methyltransferase cicE are involved in the conversion of 3-methylorsellinate into nidulol. CicB converts 3-methylorsellinate to a yet unidentified intermediate, cicH may play a ring-closing role for cichorine and cicE is plausibly responsible for the methylation of one of the phenol groups. The oxidoreductase cicC acts downstream with still unidentified enzymes to further convert nidulol into cichorin. The sequence is that of Non-reducing polyketide synthase pkbA from Emericella nidulans (strain FGSC A4 / ATCC 38163 / CBS 112.46 / NRRL 194 / M139) (Aspergillus nidulans).